The following is a 357-amino-acid chain: Chorismate synthase (357 aa).

Positions 48 and 54 each coordinate NADP(+). Residues 125 to 127, 243 to 244, Gly283, 298 to 302, and Arg324 contribute to the FMN site; these read RSS, NA, and KPTSS.

Belongs to the chorismate synthase family. In terms of assembly, homotetramer. Requires FMNH2 as cofactor.

It carries out the reaction 5-O-(1-carboxyvinyl)-3-phosphoshikimate = chorismate + phosphate. It participates in metabolic intermediate biosynthesis; chorismate biosynthesis; chorismate from D-erythrose 4-phosphate and phosphoenolpyruvate: step 7/7. Its function is as follows. Catalyzes the anti-1,4-elimination of the C-3 phosphate and the C-6 proR hydrogen from 5-enolpyruvylshikimate-3-phosphate (EPSP) to yield chorismate, which is the branch point compound that serves as the starting substrate for the three terminal pathways of aromatic amino acid biosynthesis. This reaction introduces a second double bond into the aromatic ring system. This Pasteurella multocida (strain Pm70) protein is Chorismate synthase.